Reading from the N-terminus, the 310-residue chain is Putative S-adenosyl-L-methionine-dependent methyltransferase MUL_4762 (310 aa).

Residues aspartate 132 and 161 to 162 each bind S-adenosyl-L-methionine; that span reads DL.

It belongs to the UPF0677 family.

Its function is as follows. Exhibits S-adenosyl-L-methionine-dependent methyltransferase activity. This Mycobacterium ulcerans (strain Agy99) protein is Putative S-adenosyl-L-methionine-dependent methyltransferase MUL_4762.